A 277-amino-acid polypeptide reads, in one-letter code: Bis(5'-nucleosyl)-tetraphosphatase, symmetrical (277 aa).

The protein belongs to the Ap4A hydrolase family.

The enzyme catalyses P(1),P(4)-bis(5'-adenosyl) tetraphosphate + H2O = 2 ADP + 2 H(+). In terms of biological role, hydrolyzes diadenosine 5',5'''-P1,P4-tetraphosphate to yield ADP. The chain is Bis(5'-nucleosyl)-tetraphosphatase, symmetrical from Chromobacterium violaceum (strain ATCC 12472 / DSM 30191 / JCM 1249 / CCUG 213 / NBRC 12614 / NCIMB 9131 / NCTC 9757 / MK).